Reading from the N-terminus, the 1266-residue chain is MALPMVGLLLLLLLGGPGAAITIPPEYGAHDFLQPPELTEEPPEQLVVFPSDDIVLKCVATGNPPVQYRWSREDQPFVPEEHGGVSVVPGSGTLVINATLAARLQGRFRCFATNALGTAVSPEANVIAENTPQWPKEKVTPVEVEEGDPVVLPCDPPESAVPPKIYWLNSDIVHIAQDERVSMGQDGNLYFSNAMVGDSHPDYICHAHFLGPRTIIQKEPLDLRVAPSNAVRSRRPRLLLPRDPQTTTIALRGGSVVLECIAEGLPTPWVRWRRLNGPLLPGGVGNFNKTLRLWGVTESDDGEYECVAENGRGTARGTHSVTVEAAPYWVRRPQSGVFGPGETARLDCEVGGKPRPQIQWSINGVPIEAAGAERRWLRGGALVLPELRPNDSAVLQCEARNRHGPLLANAFLHVVELPLRMLTADEQRYEVVENQTVFLHCRTFGAPAPNVEWLTPTLEPALQDDRSFVFTNGSLRVSAVRGGDGGVYTCMAQNAHSNGSLTALLEVRAPTRISAPPRSATAKKGETVTFHCGATFDPAVTPGELRWLRGGQPLPDDPRYSVAAEMTVSNVDYGDEGTIQCRASTPLDSAEAEAQLRVVGRPPSRDLQVMEVDEHRVRLSWTPGDDHNSPIEKFVVEEEEEREDLQRGFGAADVPGQPWTPPLPLSPYGRFPFRVVAVNAYGRGEHHAPSAPIETPPAAPERNPGGVHGEGNETGNLVITWEPLPPQAWNAPWARYRVQWRPLEEPGGGGPSGGFPWAESTVDAPPVVVGGLPPFSPFQIRVQAVNGAGKGPEATPGVGHSGEDLPLVYPENVGVELLNSSTVRVRWTLGGGPKELRGRLRGFRVLYWRLGWVGERSRRQAPPDPPQIPQSPAEDPPPFPPVALTVGGDARGALLGGLRPWSRYQLRVLVFNGRGDGPPSEPIAFETPEGVPGPPEELRVERLDDTALSVVERRTFKRSITGYVLRYQQVEPGSALPGGSVLRDPQCDLRGLNARSRYRLALPSTPRERPALQTVGSTKPEPPSPLWSRFGVGGRGGFHGAAVEFGAAQEDDVEFEVQFMNKSTDEPWRTSGRANSSLRRYRLEGLRPGTAYRVQFVGRNRSGENVAFWESEVQTNGTVVPQPGGGVCTKGWFIGFVSSVVLLLLILLILCFIKRSKGGKYSVKDKEDTQVDSEARPMKDETFGEYRSLESEAEKGSASGSGAGSGVGSPGRGPCAAGSEDSLAGYGGSGDVQFNEDGSFIGQYRGPGAGPGSSGPASPCAGPPLD.

A signal peptide spans 1 to 20 (MALPMVGLLLLLLLGGPGAA). At 21 to 1130 (ITIPPEYGAH…PQPGGGVCTK (1110 aa)) the chain is on the extracellular side. Ig-like C2-type domains are found at residues 36–128 (PELT…NVIA), 135–221 (PKEK…KEPL), 236–322 (PRLL…HSVT), 327–413 (PYWV…AFLH), 418–506 (PLRM…ALLE), and 510–597 (PTRI…AQLR). Disulfide bonds link Cys58-Cys110, Cys154-Cys205, Cys260-Cys306, and Cys348-Cys397. N-linked (GlcNAc...) asparagine glycosylation is present at Asn97. N-linked (GlcNAc...) asparagine glycans are attached at residues Asn288, Asn390, Asn434, Asn472, and Asn498. The cysteines at positions 441 and 490 are disulfide-linked. The cysteines at positions 532 and 581 are disulfide-linked. Fibronectin type-III domains are found at residues 603 to 698 (PSRD…TPPA), 700 to 804 (PERN…SGED), 809 to 930 (YPEN…TPEG), 934 to 1021 (PPEE…TKPE), and 1022 to 1118 (PPSP…TNGT). The disordered stretch occupies residues 685–710 (EHHAPSAPIETPPAAPERNPGGVHGE). N-linked (GlcNAc...) asparagine glycans are attached at residues Asn712 and Asn819. Residues 857–882 (SRRQAPPDPPQIPQSPAEDPPPFPPV) form a disordered region. The segment covering 862–881 (PPDPPQIPQSPAEDPPPFPP) has biased composition (pro residues). The Cell attachment site motif lies at 914–916 (RGD). A disordered region spans residues 1004 to 1025 (STPRERPALQTVGSTKPEPPSP). 4 N-linked (GlcNAc...) asparagine glycosylation sites follow: Asn1061, Asn1075, Asn1100, and Asn1116. Residues 1131-1153 (GWFIGFVSSVVLLLLILLILCFI) form a helical membrane-spanning segment. At 1154–1266 (KRSKGGKYSV…ASPCAGPPLD (113 aa)) the chain is on the cytoplasmic side. Residues 1163-1195 (VKDKEDTQVDSEARPMKDETFGEYRSLESEAEK) are compositionally biased toward basic and acidic residues. A disordered region spans residues 1163-1266 (VKDKEDTQVD…ASPCAGPPLD (104 aa)). Residues 1199 to 1211 (SGSGAGSGVGSPG) show a composition bias toward gly residues.

This sequence belongs to the immunoglobulin superfamily. L1/neurofascin/NgCAM family. Binds to itself and to axonin 1. Brain.

The protein localises to the cell membrane. Its function is as follows. Mediates the adhesion of neurons to neurons and neurons to glia. It is involved in neuronal migration, neurite fasciculation and outgrowth. This is Neuronal-glial cell adhesion molecule from Gallus gallus (Chicken).